Reading from the N-terminus, the 352-residue chain is Alanine racemase (352 aa).

The active-site Proton acceptor; specific for D-alanine is the Lys33. Position 33 is an N6-(pyridoxal phosphate)lysine (Lys33). Position 129 (Arg129) interacts with substrate. Residue Tyr250 is the Proton acceptor; specific for L-alanine of the active site. A substrate-binding site is contributed by Met298.

Belongs to the alanine racemase family. It depends on pyridoxal 5'-phosphate as a cofactor.

It carries out the reaction L-alanine = D-alanine. The protein operates within amino-acid biosynthesis; D-alanine biosynthesis; D-alanine from L-alanine: step 1/1. In terms of biological role, catalyzes the interconversion of L-alanine and D-alanine. May also act on other amino acids. The chain is Alanine racemase (alr) from Neisseria gonorrhoeae (strain ATCC 700825 / FA 1090).